The primary structure comprises 674 residues: 1,4-alpha-glucan branching enzyme GlgB 1 (674 aa).

Asp-336 serves as the catalytic Nucleophile. Catalysis depends on Glu-389, which acts as the Proton donor.

This sequence belongs to the glycosyl hydrolase 13 family. GlgB subfamily. As to quaternary structure, monomer.

The catalysed reaction is Transfers a segment of a (1-&gt;4)-alpha-D-glucan chain to a primary hydroxy group in a similar glucan chain.. Its pathway is glycan biosynthesis; glycogen biosynthesis. Its function is as follows. Catalyzes the formation of the alpha-1,6-glucosidic linkages in glycogen by scission of a 1,4-alpha-linked oligosaccharide from growing alpha-1,4-glucan chains and the subsequent attachment of the oligosaccharide to the alpha-1,6 position. This is 1,4-alpha-glucan branching enzyme GlgB 1 from Clostridium perfringens (strain SM101 / Type A).